Here is a 410-residue protein sequence, read N- to C-terminus: Multidrug resistance protein MdtM (410 aa).

Residues 1–11 lie on the Cytoplasmic side of the membrane; that stretch reads MPRFFARHAAT. Residues 12-32 form a helical membrane-spanning segment; the sequence is LFFPMALILYDFAAYLSTDLI. Residues 33 to 48 lie on the Periplasmic side of the membrane; it reads QPGIINVVRDFNADVS. The helical transmembrane segment at 49 to 69 threads the bilayer; sequence LAPAAVSLYLAGGMALQWLLG. The Cytoplasmic segment spans residues 70–78; that stretch reads PLSDRIGRK. A helical membrane pass occupies residues 79–99; that stretch reads PVLITGALIFTLACAATMFTT. Residues 100-103 lie on the Periplasmic side of the membrane; it reads SMTQ. The helical transmembrane segment at 104 to 124 threads the bilayer; the sequence is FLIARAIQGTSICFIATVGYV. The Cytoplasmic portion of the chain corresponds to 125-140; it reads TVQEAFGQTKGIKLMA. A helical membrane pass occupies residues 141–161; sequence IITSIVLIAPIIGPLSGAALM. At 162–167 the chain is on the periplasmic side; it reads HFVHWK. Residues 168 to 188 form a helical membrane-spanning segment; it reads VLFAIIAVMGFISFVGLLLAM. At 189 to 216 the chain is on the cytoplasmic side; sequence PETVKRGAVPFSAKSVLRDFRNVFCNRL. The helical transmembrane segment at 217–237 threads the bilayer; sequence FLFGAATISLSYIPMMSWVAV. The Periplasmic portion of the chain corresponds to 238–251; the sequence is SPVILIDAGGLTTS. A helical membrane pass occupies residues 252–272; it reads QFAWTQVPVFGAVIVANAIVA. At 273–282 the chain is on the cytoplasmic side; it reads RFVKDPTEPR. The chain crosses the membrane as a helical span at residues 283–303; sequence FIWRAVPIQLVGLALLIIGNL. Over 304–307 the chain is Periplasmic; it reads LSPH. Residues 308 to 328 form a helical membrane-spanning segment; sequence VWLWSVLGTSLYAFGIGLIFP. Residues 329-348 are Cytoplasmic-facing; it reads TLFRFTLFSNNLPKGTVSAS. The chain crosses the membrane as a helical span at residues 349-369; that stretch reads LNMVILMVMSVSVEIGRWLWF. Topologically, residues 370–373 are periplasmic; the sequence is NGGR. The helical transmembrane segment at 374–394 threads the bilayer; it reads LPFHLLAVVAGVIVVFTLAGL. The Cytoplasmic segment spans residues 395-410; that stretch reads LNRVRQHQAAELAEEQ.

The protein belongs to the major facilitator superfamily.

The protein localises to the cell inner membrane. In terms of biological role, proton-dependent efflux pump. Confers resistance to a broad spectrum of chemically unrelated substrates. In Escherichia coli O157:H7, this protein is Multidrug resistance protein MdtM (mdtM).